We begin with the raw amino-acid sequence, 151 residues long: uncharacterized protein (151 aa).

The next 3 membrane-spanning stretches (helical) occupy residues 14 to 34 (GAALLDYIIVSVPLLLIYWLI), 45 to 65 (ISLVVLLYSILLPMFWRGYLI), and 91 to 111 (VIVAGLVYCITFGLGLIASLI).

Its subcellular location is the cell membrane. This is an uncharacterized protein from Bacillus subtilis (strain 168).